The chain runs to 1756 residues: Transposon Ty1-BR Gag-Pol polyprotein (1756 aa).

Composition is skewed to polar residues over residues 1–10 (MESQQLSNYP), 48–60 (TKAN…TPAS), and 127–152 (QSQF…GNTF). Disordered stretches follow at residues 1-93 (MESQ…MMTQ), 126-173 (PQSQ…RPPP), and 352-421 (GSRN…SKST). The span at 153–165 (TDSSSADSDMTST) shows a compositional bias: low complexity. The RNA-binding stretch occupies residues 299–401 (NNGIHINNKV…NSKSKTARAH (103 aa)). A compositionally biased stretch (low complexity) spans 402–418 (NVSTSNNSPSTDNDSIS). At S416 the chain carries Phosphoserine. The For protease activity; shared with dimeric partner role is filled by D461. The tract at residues 583-640 (NVHTSESTRKYPYPFIHRMLAHANAQTIRYSLKNNTITYFNESDVDWSSAIDYQCPDC) is integrase-type zinc finger-like. The 176-residue stretch at 660-835 (NSYEPFQYLH…AGLDISTLLP (176 aa)) folds into the Integrase catalytic domain. D671 and D736 together coordinate Mg(2+). 2 disordered regions span residues 956–1088 (SKAV…TEKR) and 1142–1173 (PTEL…SNAY). Low complexity predominate over residues 960–969 (SPTDSTPPST). Polar residues-rich tracts occupy residues 1005–1017 (STPQ…STDS) and 1031–1043 (MSQS…SYAS). The segment covering 1044 to 1053 (KSKDFRHSDS) has biased composition (basic and acidic residues). Over residues 1054-1082 (YSDNETNHTNVPISSTGGTNNKTVPQTSE) the composition is skewed to polar residues. The Bipartite nuclear localization signal motif lies at 1179 to 1213 (KKRSLEDNETEIKVSRDTWNTKNMRSLEPPRSKKR). A Reverse transcriptase Ty1/copia-type domain is found at 1339–1477 (NNYYITQLDI…DILGLEIKYQ (139 aa)). Positions 1347, 1428, 1429, 1611, 1653, and 1686 each coordinate Mg(2+). Residues 1611–1753 (DASYGNQPYY…IKTFKLLTNK (143 aa)) form the RNase H Ty1/copia-type domain.

As to quaternary structure, the capsid protein forms a homotrimer, from which the VLPs are assembled. The protease is a homodimer, whose active site consists of two apposed aspartic acid residues. In terms of processing, initially, virus-like particles (VLPs) are composed of the structural unprocessed proteins Gag and Gag-Pol, and also contain the host initiator methionine tRNA (tRNA(i)-Met) which serves as a primer for minus-strand DNA synthesis, and a dimer of genomic Ty RNA. Processing of the polyproteins occurs within the particle and proceeds by an ordered pathway, called maturation. First, the protease (PR) is released by autocatalytic cleavage of the Gag-Pol polyprotein yielding capsid protein p45 and a Pol-p154 precursor protein. This cleavage is a prerequisite for subsequent processing of Pol-p154 at the remaining sites to release the mature structural and catalytic proteins. Maturation takes place prior to the RT reaction and is required to produce transposition-competent VLPs.

It is found in the cytoplasm. The protein localises to the nucleus. It catalyses the reaction DNA(n) + a 2'-deoxyribonucleoside 5'-triphosphate = DNA(n+1) + diphosphate. The catalysed reaction is Endonucleolytic cleavage to 5'-phosphomonoester.. In terms of biological role, capsid protein (CA) is the structural component of the virus-like particle (VLP), forming the shell that encapsulates the retrotransposons dimeric RNA genome. The particles are assembled from trimer-clustered units and there are holes in the capsid shells that allow for the diffusion of macromolecules. CA also has nucleocapsid-like chaperone activity, promoting primer tRNA(i)-Met annealing to the multipartite primer-binding site (PBS), dimerization of Ty1 RNA and initiation of reverse transcription. The aspartyl protease (PR) mediates the proteolytic cleavages of the Gag and Gag-Pol polyproteins after assembly of the VLP. Its function is as follows. Reverse transcriptase/ribonuclease H (RT) is a multifunctional enzyme that catalyzes the conversion of the retro-elements RNA genome into dsDNA within the VLP. The enzyme displays a DNA polymerase activity that can copy either DNA or RNA templates, and a ribonuclease H (RNase H) activity that cleaves the RNA strand of RNA-DNA heteroduplexes during plus-strand synthesis and hydrolyzes RNA primers. The conversion leads to a linear dsDNA copy of the retrotransposon that includes long terminal repeats (LTRs) at both ends. Functionally, integrase (IN) targets the VLP to the nucleus, where a subparticle preintegration complex (PIC) containing at least integrase and the newly synthesized dsDNA copy of the retrotransposon must transit the nuclear membrane. Once in the nucleus, integrase performs the integration of the dsDNA into the host genome. In Saccharomyces cerevisiae (strain ATCC 204508 / S288c) (Baker's yeast), this protein is Transposon Ty1-BR Gag-Pol polyprotein (TY1B-BR).